Here is a 508-residue protein sequence, read N- to C-terminus: UTP--glucose-1-phosphate uridylyltransferase (508 aa).

The residue at position 13 (serine 13) is a Phosphoserine. UTP-binding positions include 113–116 (LNGG), lysine 127, glutamine 190, and glycine 222. Residue 115–116 (GG) participates in substrate binding. Residue lysine 127 participates in Mg(2+) binding. Residues histidine 223 and 251 to 253 (NID) each bind substrate. UTP-binding residues include aspartate 253 and lysine 396. Residue aspartate 253 participates in Mg(2+) binding. Lysine 396 is a catalytic residue. Threonine 426 carries the phosphothreonine modification. Serine 434 carries the phosphoserine modification. An N6-acetyllysine modification is found at lysine 438. 2 positions are modified to phosphoserine: serine 448 and serine 461. Residues 457–508 (HLTVSGDVTFGKNVSLKGTVIIIANHGDRIDIPPGAVLENKIVSGNLRILDH) are oligomerization. Positions 502-503 (NL) are critical for end-to-end subunit interaction.

The protein belongs to the UDPGP type 1 family. Homooctamer.

The protein localises to the cytoplasm. It catalyses the reaction alpha-D-glucose 1-phosphate + UTP + H(+) = UDP-alpha-D-glucose + diphosphate. It functions in the pathway glycan biosynthesis; glycogen biosynthesis. Functionally, UTP--glucose-1-phosphate uridylyltransferase catalyzing the conversion of glucose-1-phosphate into UDP-glucose, a crucial precursor for the production of glycogen. The polypeptide is UTP--glucose-1-phosphate uridylyltransferase (UGP2) (Cricetulus griseus (Chinese hamster)).